Consider the following 596-residue polypeptide: Elongation factor 4 (596 aa).

One can recognise a tr-type G domain in the interval 2-184 (KHIRNFSIIA…VIVAKIPPPE (183 aa)). GTP is bound by residues 14-19 (DHGKST) and 131-134 (NKID).

This sequence belongs to the TRAFAC class translation factor GTPase superfamily. Classic translation factor GTPase family. LepA subfamily.

Its subcellular location is the cell inner membrane. It carries out the reaction GTP + H2O = GDP + phosphate + H(+). Required for accurate and efficient protein synthesis under certain stress conditions. May act as a fidelity factor of the translation reaction, by catalyzing a one-codon backward translocation of tRNAs on improperly translocated ribosomes. Back-translocation proceeds from a post-translocation (POST) complex to a pre-translocation (PRE) complex, thus giving elongation factor G a second chance to translocate the tRNAs correctly. Binds to ribosomes in a GTP-dependent manner. The protein is Elongation factor 4 of Shewanella putrefaciens (strain CN-32 / ATCC BAA-453).